Here is a 184-residue protein sequence, read N- to C-terminus: RNA polymerase sigma factor HrpL (184 aa).

The Polymerase core binding signature appears at 49–62; sequence DILQCVFLEALRNE. The segment at residues 151-170 is a DNA-binding region (H-T-H motif); sequence YQETANTLGVPIGTVRSRLS.

It belongs to the sigma-70 factor family. ECF subfamily.

Its function is as follows. Sigma factors are initiation factors that promote the attachment of RNA polymerase to specific initiation sites and are then released. This sigma factor is involved in the activation of hprD as well as other hrp loci which are involved in plant pathogenicity, hrmA and avr genes. The sequence is that of RNA polymerase sigma factor HrpL (hrpL) from Pseudomonas syringae pv. syringae.